Consider the following 338-residue polypeptide: Nickel transporter NixA (338 aa).

Helical transmembrane passes span 11-31 (WLPYIAIVILLHVIGFSFLWI), 37-57 (HILFGMGILAYTLGLRHAFDA), 79-99 (GVGFYFSIGHSSVVFLMAVFL), 127-147 (FFLVLIGVLNLIILISLINLF), 187-207 (VLPLGFLFGLGFDTASEIALL), 217-237 (AISFIGILSLPILFASGMSLL), 266-286 (ITAISVMAALVIGMIELLQIL), and 307-327 (YLGYILVALFLITWLISSLIW).

Belongs to the NiCoT transporter (TC 2.A.52) family.

It localises to the cell membrane. Secondary nickel transporter. Required for full urease activity. This is Nickel transporter NixA from Staphylococcus aureus (strain NCTC 8325 / PS 47).